The sequence spans 35 residues: Potassium channel toxin alpha-KTx 6.1 (35 aa).

Disulfide bonds link cysteine 4–cysteine 25, cysteine 10–cysteine 30, cysteine 14–cysteine 32, and cysteine 20–cysteine 35.

The protein belongs to the short scorpion toxin superfamily. Potassium channel inhibitor family. Alpha-KTx 06 subfamily. In terms of tissue distribution, expressed by the venom gland.

The protein localises to the secreted. Functionally, potently and reversibly inhibits the insect voltage-gated Shaker (Sh) potassium channel (isoform alpha (B)), the mammalian voltage-gated potassium channels Kv1.2/KCNA2 (IC(50)=0.44 nM), and the calcium-activated potassium channel KCa2.3/KCNN3 (Kd=330 nM). Its effect on Kv1.3/KCNA3 is controversial, since this channel is voltage-independently inhibited in PubMed:9464266, but is not affected in PubMed:10931199. Furthermore, this toxin competes with apamin (a small conductance calcium-activated potassium channel inhibitor) for binding to rat brain synaptosomes. The chain is Potassium channel toxin alpha-KTx 6.1 from Pandinus imperator (Emperor scorpion).